The following is a 161-amino-acid chain: uncharacterized protein (161 aa).

A helical transmembrane segment spans residues 76–94 (ISISSQCIFNVVILSFVFT).

Its subcellular location is the membrane. This is an uncharacterized protein from Saccharomyces cerevisiae (strain ATCC 204508 / S288c) (Baker's yeast).